The primary structure comprises 71 residues: Protein CYSTEINE-RICH TRANSMEMBRANE MODULE 6 (71 aa).

Residues Met-1–Ala-12 show a composition bias toward polar residues. Positions Met-1–Thr-36 are disordered. A compositionally biased stretch (pro residues) spans Pro-14 to Gly-30. A helical transmembrane segment spans residues Ser-48 to Cys-64.

This sequence belongs to the CYSTM1 family. As to quaternary structure, homodimer and heterodimers. Interacts with CYSTM7 and WIH1/CYSTM13. Mostly expressed in roots, stems, rosette leaves and siliques and, to a lower extent, in flowers and cauline leaves.

The protein localises to the cell membrane. The protein resides in the cytoplasm. Its function is as follows. Involved in resistance to abiotic stress. The chain is Protein CYSTEINE-RICH TRANSMEMBRANE MODULE 6 from Arabidopsis thaliana (Mouse-ear cress).